The chain runs to 181 residues: Keratin-associated protein 4-5 (181 aa).

Tandem repeats lie at residues 5-9, 20-24, 25-29, 30-34, 35-39, 40-44, 45-49, 55-59, 60-64, 65-69, 70-74, 75-79, 80-84, 85-89, 90-94, 95-99, 100-104, 105-109, 110-114, 115-119, 120-124, 125-129, 130-134, 135-139, 140-144, and 145-149. The interval 5 to 154 is 26 X 5 AA repeats of C-C-[GRQVCHIEK]-[SPTR]-[VSTQYC]; it reads CCGSVSSEQS…CCVRPVCGRV (150 aa).

It belongs to the KRTAP type 4 family. Interacts with hair keratins. In terms of tissue distribution, expressed in the hair follicles.

In the hair cortex, hair keratin intermediate filaments are embedded in an interfilamentous matrix, consisting of hair keratin-associated proteins (KRTAP), which are essential for the formation of a rigid and resistant hair shaft through their extensive disulfide bond cross-linking with abundant cysteine residues of hair keratins. The matrix proteins include the high-sulfur and high-glycine-tyrosine keratins. This Homo sapiens (Human) protein is Keratin-associated protein 4-5 (KRTAP4-5).